The following is a 207-amino-acid chain: ATP-dependent dethiobiotin synthetase BioD (207 aa).

D11–F16 serves as a coordination point for ATP. T15 contacts Mg(2+). K31 is a catalytic residue. S35 lines the substrate pocket. Residues D42, E95–G98, and N155–Q156 each bind ATP. Positions 42 and 95 each coordinate Mg(2+).

This sequence belongs to the dethiobiotin synthetase family. In terms of assembly, homodimer. The cofactor is Mg(2+).

It is found in the cytoplasm. The catalysed reaction is (7R,8S)-7,8-diammoniononanoate + CO2 + ATP = (4R,5S)-dethiobiotin + ADP + phosphate + 3 H(+). It functions in the pathway cofactor biosynthesis; biotin biosynthesis; biotin from 7,8-diaminononanoate: step 1/2. Functionally, catalyzes a mechanistically unusual reaction, the ATP-dependent insertion of CO2 between the N7 and N8 nitrogen atoms of 7,8-diaminopelargonic acid (DAPA, also called 7,8-diammoniononanoate) to form a ureido ring. The sequence is that of ATP-dependent dethiobiotin synthetase BioD from Chlamydia abortus (strain DSM 27085 / S26/3) (Chlamydophila abortus).